A 615-amino-acid chain; its full sequence is Pre-hexon-linking protein IIIa (615 aa).

Residues 1-92 (MDPGLKPSSS…DLLIRVHKYN (92 aa)) form a peripentonal hexon-tethering domain region. The binding to hexon-linking protein stretch occupies residues 124-238 (SNQVILNDFL…FTNENTFTPD (115 aa)). S212 is subject to Phosphoserine; by host. T262 bears the Phosphothreonine; by host mark. Basic and acidic residues predominate over residues 400–409 (EREALEEAGP). Disordered regions lie at residues 400–473 (EREA…SVDS) and 528–615 (GERI…NGLK). Low complexity-rich tracts occupy residues 419-430 (PSSSPQSSKIQS) and 451-460 (SVRSAPPSVS). S451 is subject to Phosphoserine; by host. The segment covering 539 to 548 (RAEIERRRIA) has biased composition (basic and acidic residues). Over residues 557 to 570 (PSLSSESSAPSLSS) the composition is skewed to low complexity. A propeptide spanning residues 602 to 615 (GNPFDYLRPRNGLK) is cleaved from the precursor.

The protein belongs to the adenoviridae hexon-linking protein IIIa family. In terms of assembly, interacts with hexon proteins; this interaction tethers the peripentonal hexons to hexons situated in the facet. Interacts with the penton protein (via N-terminus). Interacts with packaging protein 3; this interaction is required to promote correct genome packaging. Cleaved near the C-terminus by the viral protease during virion maturation to form the mature protein.

It localises to the virion. The protein resides in the host nucleus. Functionally, structural component of the virion that acts as a cement protein on the capsid exterior which mediates the interactions between the hexons, including the peripentonal hexons, and reaches all the way to the penton vertices. Two hexon linking proteins IIIa, one from each facet, stabilize the unique edge interface between a pair of facets. As the virus enters the host cell, hexon linking proteins IIIa are shed concomitant with virion acidification in the endosome. During virus assembly, seems to play a role in the serotype specificity of the packaging of viral DNA via its interaction with packaging protein 3. This Snake adenovirus serotype 1 (SnAdV-1) protein is Pre-hexon-linking protein IIIa.